A 216-amino-acid chain; its full sequence is Uracil phosphoribosyltransferase (216 aa).

5-phospho-alpha-D-ribose 1-diphosphate is bound by residues Arg84, Arg109, and 137–145 (DPMLATGNT). Residues Ile202 and 207–209 (GDA) contribute to the uracil site. Residue Asp208 coordinates 5-phospho-alpha-D-ribose 1-diphosphate.

Belongs to the UPRTase family. It depends on Mg(2+) as a cofactor.

The catalysed reaction is UMP + diphosphate = 5-phospho-alpha-D-ribose 1-diphosphate + uracil. The protein operates within pyrimidine metabolism; UMP biosynthesis via salvage pathway; UMP from uracil: step 1/1. With respect to regulation, allosterically activated by GTP. Its function is as follows. Catalyzes the conversion of uracil and 5-phospho-alpha-D-ribose 1-diphosphate (PRPP) to UMP and diphosphate. The chain is Uracil phosphoribosyltransferase from Synechocystis sp. (strain ATCC 27184 / PCC 6803 / Kazusa).